The primary structure comprises 206 residues: Thiamine-phosphate synthase (206 aa).

4-amino-2-methyl-5-(diphosphooxymethyl)pyrimidine contacts are provided by residues 39-43 (QYREK) and Asn74. 2 residues coordinate Mg(2+): Asp75 and Asp94. Ser112 is a 4-amino-2-methyl-5-(diphosphooxymethyl)pyrimidine binding site. 138 to 140 (TNT) is a 2-[(2R,5Z)-2-carboxy-4-methylthiazol-5(2H)-ylidene]ethyl phosphate binding site. Lys141 contacts 4-amino-2-methyl-5-(diphosphooxymethyl)pyrimidine. Residues Gly170 and 190–191 (IS) contribute to the 2-[(2R,5Z)-2-carboxy-4-methylthiazol-5(2H)-ylidene]ethyl phosphate site.

This sequence belongs to the thiamine-phosphate synthase family. The cofactor is Mg(2+).

The enzyme catalyses 2-[(2R,5Z)-2-carboxy-4-methylthiazol-5(2H)-ylidene]ethyl phosphate + 4-amino-2-methyl-5-(diphosphooxymethyl)pyrimidine + 2 H(+) = thiamine phosphate + CO2 + diphosphate. It carries out the reaction 2-(2-carboxy-4-methylthiazol-5-yl)ethyl phosphate + 4-amino-2-methyl-5-(diphosphooxymethyl)pyrimidine + 2 H(+) = thiamine phosphate + CO2 + diphosphate. It catalyses the reaction 4-methyl-5-(2-phosphooxyethyl)-thiazole + 4-amino-2-methyl-5-(diphosphooxymethyl)pyrimidine + H(+) = thiamine phosphate + diphosphate. It functions in the pathway cofactor biosynthesis; thiamine diphosphate biosynthesis; thiamine phosphate from 4-amino-2-methyl-5-diphosphomethylpyrimidine and 4-methyl-5-(2-phosphoethyl)-thiazole: step 1/1. Its function is as follows. Condenses 4-methyl-5-(beta-hydroxyethyl)thiazole monophosphate (THZ-P) and 2-methyl-4-amino-5-hydroxymethyl pyrimidine pyrophosphate (HMP-PP) to form thiamine monophosphate (TMP). This chain is Thiamine-phosphate synthase, found in Oceanobacillus iheyensis (strain DSM 14371 / CIP 107618 / JCM 11309 / KCTC 3954 / HTE831).